The chain runs to 97 residues: Co-chaperonin GroES (97 aa).

The protein belongs to the GroES chaperonin family. As to quaternary structure, heptamer of 7 subunits arranged in a ring. Interacts with the chaperonin GroEL.

Its subcellular location is the cytoplasm. Functionally, together with the chaperonin GroEL, plays an essential role in assisting protein folding. The GroEL-GroES system forms a nano-cage that allows encapsulation of the non-native substrate proteins and provides a physical environment optimized to promote and accelerate protein folding. GroES binds to the apical surface of the GroEL ring, thereby capping the opening of the GroEL channel. This Pseudomonas putida (strain ATCC 700007 / DSM 6899 / JCM 31910 / BCRC 17059 / LMG 24140 / F1) protein is Co-chaperonin GroES.